A 118-amino-acid polypeptide reads, in one-letter code: Putative pterin-4-alpha-carbinolamine dehydratase (118 aa).

It belongs to the pterin-4-alpha-carbinolamine dehydratase family.

It carries out the reaction (4aS,6R)-4a-hydroxy-L-erythro-5,6,7,8-tetrahydrobiopterin = (6R)-L-erythro-6,7-dihydrobiopterin + H2O. The sequence is that of Putative pterin-4-alpha-carbinolamine dehydratase from Pseudomonas paraeruginosa (strain DSM 24068 / PA7) (Pseudomonas aeruginosa (strain PA7)).